The primary structure comprises 368 residues: Mediator of RNA polymerase II transcription subunit 2 (368 aa).

Over residues 112-163 (KKKEQEEEEEKKKKQKEEEEKRKKELEEQERKKKEQEEEEKRRRQQEQDGDK) the composition is skewed to basic and acidic residues. Disordered regions lie at residues 112–231 (KKKE…DSQS) and 265–308 (SNAN…NNET). Residues 177–192 (DLDTSQPGTSGQNDIK) are compositionally biased toward polar residues. Positions 265-290 (SNANATTNSVPNNNNPATNDSNMNND) are enriched in low complexity.

Belongs to the Mediator complex subunit 2 family. In terms of assembly, component of the Mediator complex.

It is found in the nucleus. Its function is as follows. Component of the Mediator complex, a coactivator involved in the regulated transcription of nearly all RNA polymerase II-dependent genes. Mediator functions as a bridge to convey information from gene-specific regulatory proteins to the basal RNA polymerase II transcription machinery. Mediator is recruited to promoters by direct interactions with regulatory proteins and serves as a scaffold for the assembly of a functional preinitiation complex with RNA polymerase II and the general transcription factors. This is Mediator of RNA polymerase II transcription subunit 2 (MED2) from Candida glabrata (strain ATCC 2001 / BCRC 20586 / JCM 3761 / NBRC 0622 / NRRL Y-65 / CBS 138) (Yeast).